The primary structure comprises 146 residues: Putative inactive cytochrome P450 2G1 (146 aa).

Cys91 provides a ligand contact to heme.

The protein belongs to the cytochrome P450 family. Heme is required as a cofactor.

The protein is Putative inactive cytochrome P450 2G1 (CYP2G1P) of Homo sapiens (Human).